Here is a 210-residue protein sequence, read N- to C-terminus: MHMIRRAAGALAVFAVAALAAAPAWAATAQEQLDTFVATVKGATGSFKQSTVSPQGATQPAQSGTFAFQRPGKFKWAVQLPYEQLIVSDGKQVFQYDPDLAQVTVRQVDQAIGTSPAAILFGAGQLSQAFAVSALPDRDGLQWLRAKPRNADAGFSQVDIGLRDNQPARIELVDAFGQTTRVELSNLLPGAVPASEFQFTPPQGVDVVKM.

An N-terminal signal peptide occupies residues 1–26 (MHMIRRAAGALAVFAVAALAAAPAWA).

This sequence belongs to the LolA family. In terms of assembly, monomer.

It localises to the periplasm. Its function is as follows. Participates in the translocation of lipoproteins from the inner membrane to the outer membrane. Only forms a complex with a lipoprotein if the residue after the N-terminal Cys is not an aspartate (The Asp acts as a targeting signal to indicate that the lipoprotein should stay in the inner membrane). This chain is Outer-membrane lipoprotein carrier protein, found in Bordetella pertussis (strain Tohama I / ATCC BAA-589 / NCTC 13251).